The sequence spans 500 residues: Kynurenine 3-monooxygenase acdD (500 aa).

Residues valine 17 and 36 to 38 (ELR) each bind FAD. A glycan (N-linked (GlcNAc...) asparagine) is linked at asparagine 50. Alanine 58 serves as a coordination point for FAD. L-kynurenine contacts are provided by arginine 89 and tyrosine 106. Residues arginine 118 and leucine 143 each contribute to the FAD site. A glycan (N-linked (GlcNAc...) asparagine) is linked at asparagine 163. FAD contacts are provided by residues aspartate 321 and 332 to 335 (QGLN). Residues asparagine 392 and tyrosine 428 each coordinate L-kynurenine. Residues 451–471 (LLLYGSISAIISSAAIVGVLA) traverse the membrane as a helical segment.

This sequence belongs to the aromatic-ring hydroxylase family. KMO subfamily. FAD serves as cofactor.

Its subcellular location is the mitochondrion outer membrane. The enzyme catalyses L-kynurenine + NADPH + O2 + H(+) = 3-hydroxy-L-kynurenine + NADP(+) + H2O. It participates in secondary metabolite biosynthesis. The protein operates within cofactor biosynthesis; NAD(+) biosynthesis; quinolinate from L-kynurenine: step 1/3. In terms of biological role, indoleamine 2,3-dioxygenase; part of the gene cluster that mediates the biosynthesis of aspcandine, a pyrrolobenzazepine alkaloid. Initially, the indoleamine 2,3-dioxygenase acdA accepts L-tryptophan and performs the oxidative opening of the indole ring to yield N'-formyl-L-kynurenine, which undergoes the spontaneous deformylation reaction to provide L-kynurenine. The kynurenine 3-monooxygenase acdD then hydroxylates L-kynurenine to afford 3-hydroxy-L-kynurenine. 3-hydroxy-L-kynurenine is activated by the A domain of the NRPS-PKS acdB and subsequently loaded onto the enzyme. The KS domain conducts the decarboxylative condensation of the 3-hydroxy-L-kynurenyl and malonyl moieties, and subsequent nucleophilic attacks by the two amino groups would occur nonenzymatically at two distinct positions, achieving the chain release and the construction of the tricyclic system. Finally, the dehydration reaction completes the biosynthesis to yield aspcandine. This is Kynurenine 3-monooxygenase acdD from Aspergillus candidus.